Reading from the N-terminus, the 383-residue chain is Putative transcription factor 282R (383 aa).

Belongs to the IIV-6 282R family.

Its function is as follows. Transcription activation. This is Putative transcription factor 282R from Acheta domesticus (House cricket).